We begin with the raw amino-acid sequence, 188 residues long: Non-structural protein NS2 (188 aa).

In terms of assembly, interacts with host SNRPN. Interacts with host XPO1.

It is found in the host nucleus. Functionally, plays an essential role in viral protein synthesis. Plays also a role in active nuclear export of mature particles before host cell lysis, by interacting with host XPO1. This Mus musculus (Mouse) protein is Non-structural protein NS2 (NS2).